The chain runs to 213 residues: Transcriptional regulatory protein YdfI (213 aa).

Residues 3–118 (KVLIVDDHLV…TLFHTMDAAI (116 aa)) form the Response regulatory domain. Aspartate 54 carries the post-translational modification 4-aspartylphosphate. The HTH luxR-type domain maps to 142–207 (KQRNETQLTE…EAVTIAMQKG (66 aa)). A DNA-binding region (H-T-H motif) is located at residues 166-185 (SKAIAFDLGVSERTVKSRLT).

In terms of processing, phosphorylated by YdfH.

The protein localises to the cytoplasm. Member of the two-component regulatory system YdfH/YdfI. Regulates the transcription of ydfJ by binding to its promoter region. This chain is Transcriptional regulatory protein YdfI (ydfI), found in Bacillus subtilis (strain 168).